A 182-amino-acid chain; its full sequence is Cbp/p300-interacting transactivator 4 (182 aa).

Residues Gly-22 to Cys-129 form a disordered region. Polar residues predominate over residues Ser-64–Thr-89. Residues Ala-100–Ser-117 are compositionally biased toward low complexity.

This sequence belongs to the CITED family. In terms of assembly, interacts via its C-terminal region with the CH1 domain of CREBBP and EP300. Interacts with all TFAP2/AP-2 isoforms. In terms of tissue distribution, strongly expressed in heart, spleen and testis, and weakly in liver and kidney.

The protein resides in the nucleus. The protein localises to the cytoplasm. Its function is as follows. Acts as a transcriptional coactivator for TFAP2/AP-2. Enhances estrogen-dependent transactivation mediated by estrogen receptors. May function as an inhibitor of transactivation by HIF1A by disrupting HIF1A interaction with CREBBP. May be involved in regulation of gene expression during development and differentiation of blood cells, endothelial cells and mammary epithelial cells. This Mus musculus (Mouse) protein is Cbp/p300-interacting transactivator 4.